Consider the following 115-residue polypeptide: Cytochrome c oxidase subunit 3 (115 aa).

Transmembrane regions (helical) follow at residues 32 to 52 (CLQG…LQGL) and 70 to 90 (FFLA…FLMI).

This sequence belongs to the cytochrome c oxidase subunit 3 family. In terms of assembly, component of the cytochrome c oxidase (complex IV, CIV), a multisubunit enzyme composed of a catalytic core of 3 subunits and several supernumerary subunits. The complex exists as a monomer or a dimer and forms supercomplexes (SCs) in the inner mitochondrial membrane with ubiquinol-cytochrome c oxidoreductase (cytochrome b-c1 complex, complex III, CIII).

Its subcellular location is the mitochondrion inner membrane. It carries out the reaction 4 Fe(II)-[cytochrome c] + O2 + 8 H(+)(in) = 4 Fe(III)-[cytochrome c] + 2 H2O + 4 H(+)(out). Component of the cytochrome c oxidase, the last enzyme in the mitochondrial electron transport chain which drives oxidative phosphorylation. The respiratory chain contains 3 multisubunit complexes succinate dehydrogenase (complex II, CII), ubiquinol-cytochrome c oxidoreductase (cytochrome b-c1 complex, complex III, CIII) and cytochrome c oxidase (complex IV, CIV), that cooperate to transfer electrons derived from NADH and succinate to molecular oxygen, creating an electrochemical gradient over the inner membrane that drives transmembrane transport and the ATP synthase. Cytochrome c oxidase is the component of the respiratory chain that catalyzes the reduction of oxygen to water. Electrons originating from reduced cytochrome c in the intermembrane space (IMS) are transferred via the dinuclear copper A center (CU(A)) of subunit 2 and heme A of subunit 1 to the active site in subunit 1, a binuclear center (BNC) formed by heme A3 and copper B (CU(B)). The BNC reduces molecular oxygen to 2 water molecules using 4 electrons from cytochrome c in the IMS and 4 protons from the mitochondrial matrix. This Artemia salina (Brine shrimp) protein is Cytochrome c oxidase subunit 3 (COIII).